The chain runs to 131 residues: Profilin-11 (131 aa).

A disulfide bridge connects residues Cys13 and Cys115. The Involved in PIP2 interaction signature appears at 81–97 (AVIRGKKGSGGITVKKT). Thr111 carries the phosphothreonine modification.

The protein belongs to the profilin family. Occurs in many kinds of cells as a complex with monomeric actin in a 1:1 ratio. In terms of processing, phosphorylated by MAP kinases.

Its subcellular location is the cytoplasm. It is found in the cytoskeleton. Functionally, binds to actin and affects the structure of the cytoskeleton. At high concentrations, profilin prevents the polymerization of actin, whereas it enhances it at low concentrations. This Zea mays (Maize) protein is Profilin-11.